The chain runs to 166 residues: Deglycase PYRAB04690 (166 aa).

Residues 1–166 (MRVLILSADQ…WMREFVKLLK (166 aa)) enclose the PfpI endopeptidase domain. H101 is a catalytic residue.

This sequence belongs to the peptidase C56 family. As to quaternary structure, homohexamer formed by a dimer of trimers that assemble into a hollow ring structure.

The protein localises to the cytoplasm. It catalyses the reaction N(omega)-(1-hydroxy-2-oxopropyl)-L-arginyl-[protein] + H2O = lactate + L-arginyl-[protein] + H(+). The enzyme catalyses N(6)-(1-hydroxy-2-oxopropyl)-L-lysyl-[protein] + H2O = lactate + L-lysyl-[protein] + H(+). The catalysed reaction is S-(1-hydroxy-2-oxopropyl)-L-cysteinyl-[protein] + H2O = lactate + L-cysteinyl-[protein] + H(+). It carries out the reaction N(omega)-(1-hydroxy-2-oxoethyl)-L-arginyl-[protein] + H2O = L-arginyl-[protein] + glycolate + H(+). It catalyses the reaction N(6)-(1-hydroxy-2-oxoethyl)-L-lysyl-[protein] + H2O = glycolate + L-lysyl-[protein] + H(+). The enzyme catalyses S-(1-hydroxy-2-oxoethyl)-L-cysteinyl-[protein] + H2O = glycolate + L-cysteinyl-[protein] + H(+). Functionally, deglycase that catalyzes the deglycation of the Maillard adducts formed between amino groups of proteins and reactive carbonyl groups of glyoxals. Thus, functions as a protein deglycase that repairs methylglyoxal- and glyoxal-glycated proteins, and releases repaired proteins and lactate or glycolate, respectively. Deglycates cysteine, arginine and lysine residues in proteins, and thus reactivates these proteins by reversing glycation by glyoxals. Acts on early glycation intermediates (hemithioacetals and aminocarbinols), preventing the formation of advanced glycation endproducts (AGE) that cause irreversible damage. Also displays proteolytic activity. The polypeptide is Deglycase PYRAB04690 (Pyrococcus abyssi (strain GE5 / Orsay)).